We begin with the raw amino-acid sequence, 321 residues long: Porin Omp2a (321 aa).

Positions 1-22 (MNIKSLLLGSAAALVAASGAQA) are cleaved as a signal peptide.

This sequence belongs to the alphaproteobacteria porin family. Monomer.

Its subcellular location is the cell outer membrane. Functionally, forms passive diffusion pores that allow small molecular weight hydrophilic materials across the outer membrane. The protein is Porin Omp2a (omp2a) of Brucella abortus (strain S19).